A 115-amino-acid chain; its full sequence is Large ribosomal subunit protein bL19 (115 aa).

Belongs to the bacterial ribosomal protein bL19 family.

Functionally, this protein is located at the 30S-50S ribosomal subunit interface and may play a role in the structure and function of the aminoacyl-tRNA binding site. The polypeptide is Large ribosomal subunit protein bL19 (Escherichia coli O139:H28 (strain E24377A / ETEC)).